The following is a 136-amino-acid chain: ATP synthase epsilon chain (136 aa).

Residues 88–136 form a disordered region; that stretch reads DASSAESDLQAARNEVSKMEGQPASADKVKAQQSLDRARARVQAAKNQD.

Belongs to the ATPase epsilon chain family. As to quaternary structure, F-type ATPases have 2 components, CF(1) - the catalytic core - and CF(0) - the membrane proton channel. CF(1) has five subunits: alpha(3), beta(3), gamma(1), delta(1), epsilon(1). CF(0) has three main subunits: a, b and c.

Its subcellular location is the cellular thylakoid membrane. Functionally, produces ATP from ADP in the presence of a proton gradient across the membrane. The sequence is that of ATP synthase epsilon chain from Synechococcus sp. (strain WH7803).